Consider the following 227-residue polypeptide: Protein FAM3C (227 aa).

The signal sequence occupies residues 1 to 24 (MRVAGAAKLVVAVAVFLLTFYVIS). 2 disulfides stabilise this stretch: cysteine 58–cysteine 86 and cysteine 64–cysteine 221. Residues 67–225 (KHFAFKMASG…VEMEGCIPQK (159 aa)) enclose the GG-type lectin domain.

This sequence belongs to the FAM3 family. In terms of tissue distribution, present in most secretory epithelia (at protein level).

The protein resides in the secreted. It localises to the cytoplasmic vesicle. In terms of biological role, may be involved in retinal laminar formation. Promotes epithelial to mesenchymal transition. This chain is Protein FAM3C (FAM3C), found in Homo sapiens (Human).